A 298-amino-acid chain; its full sequence is Nitrogenase iron protein (298 aa).

13–20 (GKGGIGKS) lines the ATP pocket. Residue Cys101 participates in [4Fe-4S] cluster binding. Arg104 is modified (ADP-ribosylarginine; by dinitrogenase reductase ADP-ribosyltransferase). Cys135 serves as a coordination point for [4Fe-4S] cluster.

The protein belongs to the NifH/BchL/ChlL family. Homodimer. [4Fe-4S] cluster is required as a cofactor. The reversible ADP-ribosylation of Arg-104 inactivates the nitrogenase reductase and regulates nitrogenase activity.

The catalysed reaction is N2 + 8 reduced [2Fe-2S]-[ferredoxin] + 16 ATP + 16 H2O = H2 + 8 oxidized [2Fe-2S]-[ferredoxin] + 2 NH4(+) + 16 ADP + 16 phosphate + 6 H(+). Functionally, the key enzymatic reactions in nitrogen fixation are catalyzed by the nitrogenase complex, which has 2 components: the iron protein and the molybdenum-iron protein. This Cyanothece sp. (strain PCC 7425 / ATCC 29141) protein is Nitrogenase iron protein.